Consider the following 249-residue polypeptide: Type III pantothenate kinase (249 aa).

6 to 13 is a binding site for ATP; it reads DCGNSFIK. Residues tyrosine 93 and 100–103 contribute to the substrate site; that span reads GMDR. The Proton acceptor role is filled by aspartate 102. K(+) is bound at residue aspartate 122. Threonine 125 lines the ATP pocket. Threonine 181 serves as a coordination point for substrate.

This sequence belongs to the type III pantothenate kinase family. As to quaternary structure, homodimer. NH4(+) serves as cofactor. Requires K(+) as cofactor.

Its subcellular location is the cytoplasm. The catalysed reaction is (R)-pantothenate + ATP = (R)-4'-phosphopantothenate + ADP + H(+). It participates in cofactor biosynthesis; coenzyme A biosynthesis; CoA from (R)-pantothenate: step 1/5. Catalyzes the phosphorylation of pantothenate (Pan), the first step in CoA biosynthesis. In Pseudomonas putida (strain W619), this protein is Type III pantothenate kinase.